The sequence spans 541 residues: Cytosolic phospholipase A2 gamma (541 aa).

The PLA2c domain occupies 1-541; that stretch reads MGSSEVSIIP…KDSARSCCLA (541 aa). The Nucleophile role is filled by serine 82. Positions 260–292 are required for lipid droplet localization; sequence LTLKGLWRRAVANAKSIGHLIFARLLRLQESSQ. Phosphoserine is present on serine 337. Catalysis depends on aspartate 385, which acts as the Proton acceptor. At cysteine 538 the chain carries Cysteine methyl ester. A lipid anchor (S-farnesyl cysteine) is attached at cysteine 538. A propeptide spans 539 to 541 (removed in mature form); it reads CLA.

As to quaternary structure, (Microbial infection) Interacts with HCV non-structural protein 4B/NS4B; this interaction likely initiates the recruitment of replication complexes to lipid droplets. Highly expressed in heart and skeletal muscle.

The protein localises to the cell membrane. The protein resides in the endoplasmic reticulum membrane. It is found in the mitochondrion membrane. Its subcellular location is the lipid droplet. It carries out the reaction a 1,2-diacyl-sn-glycero-3-phosphocholine + H2O = a 1-acyl-sn-glycero-3-phosphocholine + a fatty acid + H(+). It catalyses the reaction a 1-O-alkyl-2-acyl-sn-glycero-3-phosphocholine + H2O = a 1-O-alkyl-sn-glycero-3-phosphocholine + a fatty acid + H(+). The catalysed reaction is 1,2-dihexadecanoyl-sn-glycero-3-phosphocholine + H2O = 1-hexadecanoyl-sn-glycero-3-phosphocholine + hexadecanoate + H(+). The enzyme catalyses 1-hexadecanoyl-2-(9Z-octadecenoyl)-sn-glycero-3-phosphocholine + H2O = 1-hexadecanoyl-sn-glycero-3-phosphocholine + (9Z)-octadecenoate + H(+). It carries out the reaction 1-hexadecanoyl-2-(9Z,12Z-octadecadienoyl)-sn-glycero-3-phosphocholine + H2O = (9Z,12Z)-octadecadienoate + 1-hexadecanoyl-sn-glycero-3-phosphocholine + H(+). It catalyses the reaction 1-hexadecanoyl-2-(5Z,8Z,11Z,14Z-eicosatetraenoyl)-sn-glycero-3-phosphocholine + H2O = 1-hexadecanoyl-sn-glycero-3-phosphocholine + (5Z,8Z,11Z,14Z)-eicosatetraenoate + H(+). The catalysed reaction is 1-O-hexadecyl-2-(5Z,8Z,11Z,14Z)-eicosatetraenoyl-sn-glycero-3-phosphocholine + H2O = 1-O-hexadecyl-sn-glycero-3-phosphocholine + (5Z,8Z,11Z,14Z)-eicosatetraenoate + H(+). The enzyme catalyses 1-hexadecanoyl-2-(5Z,8Z,11Z,14Z-eicosatetraenoyl)-sn-glycero-3-phosphocholine + H2O = 2-(5Z,8Z,11Z,14Z)-eicosatetraenoyl-sn-glycero-3-phosphocholine + hexadecanoate + H(+). It carries out the reaction a 1-acyl-sn-glycero-3-phosphocholine + H2O = sn-glycerol 3-phosphocholine + a fatty acid + H(+). It catalyses the reaction 1-hexadecanoyl-sn-glycero-3-phosphocholine + H2O = sn-glycerol 3-phosphocholine + hexadecanoate + H(+). The catalysed reaction is 2 1-hexadecanoyl-sn-glycero-3-phosphocholine = 1,2-dihexadecanoyl-sn-glycero-3-phosphocholine + sn-glycerol 3-phosphocholine. The enzyme catalyses 1-hexadecanoyl-sn-glycero-3-phosphoethanolamine + 1-hexadecanoyl-sn-glycero-3-phosphocholine = 1,2-dihexadecanoyl-sn-glycero-3-phosphoethanolamine + sn-glycerol 3-phosphocholine. It carries out the reaction 1-hexadecanoyl-sn-glycero-3-phosphoethanolamine + 1-hexadecanoyl-sn-glycero-3-phosphocholine = sn-glycero-3-phosphoethanolamine + 1,2-dihexadecanoyl-sn-glycero-3-phosphocholine. It catalyses the reaction 2 1-hexadecanoyl-sn-glycero-3-phosphoethanolamine = 1,2-dihexadecanoyl-sn-glycero-3-phosphoethanolamine + sn-glycero-3-phosphoethanolamine. The catalysed reaction is 1-O-hexadecyl-sn-glycero-3-phosphocholine + 1-hexadecanoyl-sn-glycero-3-phosphocholine = 1-O-hexadecyl-2-hexadecanoyl-sn-glycero-3-phosphocholine + sn-glycerol 3-phosphocholine. The enzyme catalyses a 1-O-(1Z-alkenyl)-sn-glycero-3-phosphoethanolamine + 1-hexadecanoyl-sn-glycero-3-phosphocholine = 1-O-(1Z)-alkenyl-2-hexadecanoyl-sn-glycero-3-phosphoethanolamine + sn-glycerol 3-phosphocholine. It carries out the reaction 1-O-hexadecyl-sn-glycero-3-phosphocholine + 1-hexadecanoyl-sn-glycero-3-phosphoethanolamine = 1-O-hexadecyl-2-hexadecanoyl-sn-glycero-3-phosphocholine + sn-glycero-3-phosphoethanolamine. It catalyses the reaction 1-octadecanoyl-2-(5Z,8Z,11Z,14Z)-eicosatetraenoyl-sn-glycero-3-phosphoethanolamine + 1-hexadecanoyl-sn-glycero-3-phosphocholine = 1-octadecanoyl-sn-glycero-3-phosphoethanolamine + 1-hexadecanoyl-2-(5Z,8Z,11Z,14Z-eicosatetraenoyl)-sn-glycero-3-phosphocholine. The catalysed reaction is 1-octadecanoyl-2-(5Z,8Z,11Z,14Z)-eicosatetraenoyl-sn-glycero-3-phosphoethanolamine + 1-O-hexadecyl-sn-glycero-3-phosphocholine = 1-octadecanoyl-sn-glycero-3-phosphoethanolamine + 1-O-hexadecyl-2-(5Z,8Z,11Z,14Z)-eicosatetraenoyl-sn-glycero-3-phosphocholine. The enzyme catalyses 1-hexadecanoyl-2-(9Z,12Z-octadecadienoyl)-sn-glycero-3-phosphocholine + a 1-O-(1Z-alkenyl)-sn-glycero-3-phosphoethanolamine = 1-O-(1Z-alkenyl)-2-(9Z,12Z-octadecadienoyl)-sn-glycero-3-phosphoethanolamine + 1-hexadecanoyl-sn-glycero-3-phosphocholine. It carries out the reaction 1-hexadecanoyl-2-(5Z,8Z,11Z,14Z-eicosatetraenoyl)-sn-glycero-3-phosphocholine + a 1-O-(1Z-alkenyl)-sn-glycero-3-phosphoethanolamine = 1-O-(1Z)-alkenyl-2-(5Z,8Z,11Z,14Z)-eicosatetraenoyl-sn-glycero-3-phosphoethanolamine + 1-hexadecanoyl-sn-glycero-3-phosphocholine. With respect to regulation, not regulated by calcium, coenzyme A or ATP. Lysophospholipase activity is inhibited by palmitoyl-CoA. Lysophospholipase and O-acyltransferase activities are inhibited by methylarachidonoylfluorophosphonate. Lysophospholipase activity is inhibited by phosphatidate or lysophosphatidate. O-acyltransferase activity is up-regulated at low concentration (10-20 uM) of phosphatidate or lysophosphatidate, but inhibited at higher concentrations. Functionally, calcium-independent phospholipase, lysophospholipase and O-acyltransferase involved in phospholipid remodeling with implications in endoplasmic reticulum membrane homeostasis and lipid droplet biogenesis. Preferentially hydrolyzes the ester bond of the fatty acyl group attached at the sn-2 position of phospholipids with choline and ethanolamine head groups, producing lysophospholipids that are used in deacylation-reacylation cycles. Transfers the sn-1 fatty acyl from one lysophospholipid molecule to the sn-2 position of another lysophospholipid to form diacyl, alkylacyl and alkenylacyl glycerophospholipids. Cleaves ester bonds but not alkyl or alkenyl ether bonds at sn-1 position of lysophospholipids. Catalyzes sn-2 fatty acyl transfer from phospholipids to the sn-2 position of 1-O-alkyl or 1-O-alkenyl lysophospholipids with lower efficiency. In response to dietary fatty acids, may play a role in the formation of nascent lipid droplets from the endoplasmic reticulum likely by regulating the phospholipid composition of these organelles. In terms of biological role, (Microbial infection) May play a role in replication and assembly of human hepatitis C virus (HCV). In response to HCV infection, promotes remodeling of host endoplasmic reticulum membranes to form organelle-like structures called membranous web, where HCV replication occur. Can further mediate translocation of replication complexes to lipid droplets to enable virion assembly. Its function is as follows. (Microbial infection) May facilitate human T-lymphotropic virus type 1 (HTLV-1) infection by promoting leukotriene B4 (LTB4) biosynthesis. LTB4 acts as a chemoattractant for HTLV-1-infected CD4-positive T cells and favors cell to cell viral transmission. This chain is Cytosolic phospholipase A2 gamma (PLA2G4C), found in Homo sapiens (Human).